A 347-amino-acid polypeptide reads, in one-letter code: UDP-3-O-acylglucosamine N-acyltransferase (347 aa).

His-241 acts as the Proton acceptor in catalysis.

This sequence belongs to the transferase hexapeptide repeat family. LpxD subfamily. As to quaternary structure, homotrimer.

The enzyme catalyses a UDP-3-O-[(3R)-3-hydroxyacyl]-alpha-D-glucosamine + a (3R)-hydroxyacyl-[ACP] = a UDP-2-N,3-O-bis[(3R)-3-hydroxyacyl]-alpha-D-glucosamine + holo-[ACP] + H(+). It participates in bacterial outer membrane biogenesis; LPS lipid A biosynthesis. Catalyzes the N-acylation of UDP-3-O-acylglucosamine using 3-hydroxyacyl-ACP as the acyl donor. Is involved in the biosynthesis of lipid A, a phosphorylated glycolipid that anchors the lipopolysaccharide to the outer membrane of the cell. The polypeptide is UDP-3-O-acylglucosamine N-acyltransferase (Neisseria gonorrhoeae (strain ATCC 700825 / FA 1090)).